Consider the following 619-residue polypeptide: MSVRPHNDFDGKAFAAQLSTAPGVYRMYAGDDTLLYVGKAGALRKRVGSYFNGTPKNARLTSMLSQVARMDVTVTRSEAEALLLENQLIKSLSPRYNVSLRDDKSYPYVLLTREQWPRIALHRGPRAVQGRYFGPYTGVTGVRETLSLMHKLFKLRSCEDSVFRNRSRPCLQYQIGRCSGPCVDLVAAPDYAESVRRATMFLEGKSDQLGEEIMHSMQQASEALEFERAARLRDLLSSLRSMQNRQYVDGRAADLDVLACATQSSQACVLLLSFRDGRNLGTRSFFPKTNGEDSADEILGAFVSQYYAEHSPPREILLDREIPEAELIEAALSTAAEHKVALKWNVRGERAGYLLLATRNAQLTLVTELTSQSAQHARSEALREMLGLAEPVKRVECFDISHTMGEATVASCVVFDASGPVRGQYRRFNISGITPGDDYAAMRQAIERRFRRAVEENGVLPDVLLIDGGAGQLAQAQAALADLGVENVLLVGVAKGEERRAGHEALIMADGRELRPGAASPALQFIQQVRDEAHRFAITGHRGRRHKARMTSKLEDIPGIGPRRRASLLKHFGGLVGLKAAGEAEIARVEGVNAALAARIYANLHGLALPDAAGEASPQ.

A GIY-YIG domain is found at 20–98; that stretch reads TAPGVYRMYA…IKSLSPRYNV (79 aa). The 36-residue stretch at 207–242 folds into the UVR domain; it reads DQLGEEIMHSMQQASEALEFERAARLRDLLSSLRSM.

This sequence belongs to the UvrC family. In terms of assembly, interacts with UvrB in an incision complex.

Its subcellular location is the cytoplasm. Functionally, the UvrABC repair system catalyzes the recognition and processing of DNA lesions. UvrC both incises the 5' and 3' sides of the lesion. The N-terminal half is responsible for the 3' incision and the C-terminal half is responsible for the 5' incision. The polypeptide is UvrABC system protein C (Xanthomonas euvesicatoria pv. vesicatoria (strain 85-10) (Xanthomonas campestris pv. vesicatoria)).